A 332-amino-acid chain; its full sequence is Ketol-acid reductoisomerase (NADP(+)) (332 aa).

One can recognise a KARI N-terminal Rossmann domain in the interval 2-182; sequence AKVYHDTEVS…GATRAGVLET (181 aa). NADP(+)-binding positions include 25–28, arginine 48, serine 53, and 83–86; these read YGSQ and DTEQ. Histidine 108 is an active-site residue. Residue glycine 134 participates in NADP(+) binding. Positions 183–328 constitute a KARI C-terminal knotted domain; that stretch reads TFKEETETDL…KVLREMMPWL (146 aa). Aspartate 191, glutamate 195, glutamate 227, and glutamate 231 together coordinate Mg(2+). Serine 252 contributes to the substrate binding site.

This sequence belongs to the ketol-acid reductoisomerase family. The cofactor is Mg(2+).

The enzyme catalyses (2R)-2,3-dihydroxy-3-methylbutanoate + NADP(+) = (2S)-2-acetolactate + NADPH + H(+). It catalyses the reaction (2R,3R)-2,3-dihydroxy-3-methylpentanoate + NADP(+) = (S)-2-ethyl-2-hydroxy-3-oxobutanoate + NADPH + H(+). The protein operates within amino-acid biosynthesis; L-isoleucine biosynthesis; L-isoleucine from 2-oxobutanoate: step 2/4. It functions in the pathway amino-acid biosynthesis; L-valine biosynthesis; L-valine from pyruvate: step 2/4. Functionally, involved in the biosynthesis of branched-chain amino acids (BCAA). Catalyzes an alkyl-migration followed by a ketol-acid reduction of (S)-2-acetolactate (S2AL) to yield (R)-2,3-dihydroxy-isovalerate. In the isomerase reaction, S2AL is rearranged via a Mg-dependent methyl migration to produce 3-hydroxy-3-methyl-2-ketobutyrate (HMKB). In the reductase reaction, this 2-ketoacid undergoes a metal-dependent reduction by NADPH to yield (R)-2,3-dihydroxy-isovalerate. This is Ketol-acid reductoisomerase (NADP(+)) from Dictyoglomus turgidum (strain DSM 6724 / Z-1310).